The following is a 750-amino-acid chain: NAD(P)H-quinone oxidoreductase subunit 5, chloroplastic (750 aa).

16 helical membrane passes run 9–29 (WIIPFLPLPVPMLIGVGLLLF), 40–60 (WAFTSILLLSIVMIFATNLSI), 89–109 (IDPLTSIMSMLITTVGIMVLI), 125–145 (FAYMSFFSTSMFGLVTSSNLI), 147–167 (IYIFWELVGMCSYLLIGFWFT), 185–205 (GDFGLLLGILGFYWITGSFEF), 230–250 (AALLFAGAVAKSAQFPLHIWL), 258–278 (TPISALIHAATMVAAGIFLVA), 283–303 (LFIVIPYILNIISLIGLITVL), 327–347 (LGYMILALGIGSYRSALFHLI), 354–374 (ALLFLGSGSVIHSMETIVGYS), 396–416 (TSFLLGTLSLSGIPPLACFWS), 425–445 (WLYSPIFAIIAWATAGLTAFY), 548–568 (LFPLLVLVLFTLFVGSIGIPF), 607–627 (IFSVSIAYFGIFLASFLYKPI), and 724–744 (LFFYFCCVSIFLVIYYKFYLF).

The protein belongs to the complex I subunit 5 family. In terms of assembly, NDH is composed of at least 16 different subunits, 5 of which are encoded in the nucleus.

The protein resides in the plastid. Its subcellular location is the chloroplast thylakoid membrane. The catalysed reaction is a plastoquinone + NADH + (n+1) H(+)(in) = a plastoquinol + NAD(+) + n H(+)(out). It catalyses the reaction a plastoquinone + NADPH + (n+1) H(+)(in) = a plastoquinol + NADP(+) + n H(+)(out). Functionally, NDH shuttles electrons from NAD(P)H:plastoquinone, via FMN and iron-sulfur (Fe-S) centers, to quinones in the photosynthetic chain and possibly in a chloroplast respiratory chain. The immediate electron acceptor for the enzyme in this species is believed to be plastoquinone. Couples the redox reaction to proton translocation, and thus conserves the redox energy in a proton gradient. The polypeptide is NAD(P)H-quinone oxidoreductase subunit 5, chloroplastic (ndhF) (Tecoma stans (Yellow bells)).